The following is a 129-amino-acid chain: MPKSIIVPAGTHKPIAPFSPGTLADGIVYVSGTLPFDKNNDVVHVGDAGAQTRHVLETIKSVIETAGGTMEDVTMNHIFVTDWANYQAVNAVYAEYFPGDKPARYCILCGLVKPDALVEIATVAHIGKK.

The protein belongs to the RutC family.

The catalysed reaction is (Z)-3-aminoacrylate + H2O + H(+) = 3-oxopropanoate + NH4(+). In terms of biological role, involved in pyrimidine catabolism. Catalyzes the deamination of 3-aminoacrylate to malonic semialdehyde, a reaction that can also occur spontaneously. RutC may facilitate the reaction and modulate the metabolic fitness, rather than catalyzing essential functions. The sequence is that of 3-aminoacrylate deaminase RutC from Rhizobium rhizogenes (strain K84 / ATCC BAA-868) (Agrobacterium radiobacter).